Reading from the N-terminus, the 483-residue chain is Deoxyribodipyrimidine photo-lyase (483 aa).

Residues 2-136 (QKNLIWFRND…LVKGFHDNLL (135 aa)) enclose the Photolyase/cryptochrome alpha/beta domain. Asn109 and Glu110 together coordinate (6R)-5,10-methylene-5,6,7,8-tetrahydrofolate. Tyr225 is a binding site for FAD. Arg229 provides a ligand contact to DNA. 237–241 (TSMLS) is an FAD binding site. Interaction with DNA stretches follow at residues 278–285 (QILWREFY) and 345–346 (NR). 376 to 378 (DGD) is an FAD binding site. Gln408 provides a ligand contact to DNA.

This sequence belongs to the DNA photolyase class-1 family. As to quaternary structure, monomer. The cofactor is FAD. (6R)-5,10-methylene-5,6,7,8-tetrahydrofolate is required as a cofactor.

The enzyme catalyses cyclobutadipyrimidine (in DNA) = 2 pyrimidine residues (in DNA).. Functionally, involved in repair of UV radiation-induced DNA damage. Catalyzes the light-dependent monomerization (300-600 nm) of cyclobutyl pyrimidine dimers (in cis-syn configuration), which are formed between adjacent bases on the same DNA strand upon exposure to ultraviolet radiation. This is Deoxyribodipyrimidine photo-lyase (phrB) from Buchnera aphidicola subsp. Acyrthosiphon pisum (strain APS) (Acyrthosiphon pisum symbiotic bacterium).